Here is a 347-residue protein sequence, read N- to C-terminus: Extracellular exo-alpha-(1-&gt;5)-L-arabinofuranosidase ArbA (347 aa).

Residues methionine 1–alanine 31 form the signal peptide. Residue aspartate 35 participates in substrate binding. Aspartate 38 functions as the Proton acceptor in the catalytic mechanism. Substrate-binding positions include aspartate 90–histidine 92, glycine 115–lysine 116, asparagine 155, serine 175, and glutamate 221. Glutamate 221 (proton donor) is an active-site residue. A Ca(2+)-binding site is contributed by histidine 291. Glutamine 316 contributes to the substrate binding site.

It belongs to the glycosyl hydrolase 43 family. Homodimer.

It localises to the secreted. The catalysed reaction is Hydrolysis of terminal non-reducing alpha-L-arabinofuranoside residues in alpha-L-arabinosides.. It participates in glycan metabolism; L-arabinan degradation. Its function is as follows. Involved in the degradation of arabinan and is a key enzyme in the complete degradation of the plant cell wall. Catalyzes the cleavage of the terminal alpha-(1-&gt;5)-arabinofuranosyl bonds of linear arabinan and carboxymethylarabinan to produce almost exclusively arabinotriose. In Cellvibrio japonicus (strain Ueda107) (Pseudomonas fluorescens subsp. cellulosa), this protein is Extracellular exo-alpha-(1-&gt;5)-L-arabinofuranosidase ArbA (arbA).